The following is a 338-amino-acid chain: DNA-directed RNA polymerase subunit alpha (338 aa).

The interval 1-234 (MIHKNWAELI…DQLSIFVNFD (234 aa)) is alpha N-terminal domain (alpha-NTD). The segment at 250–338 (FNPLLLKKVD…DLAKKFEDAF (89 aa)) is alpha C-terminal domain (alpha-CTD).

This sequence belongs to the RNA polymerase alpha chain family. In terms of assembly, homodimer. The RNAP catalytic core consists of 2 alpha, 1 beta, 1 beta' and 1 omega subunit. When a sigma factor is associated with the core the holoenzyme is formed, which can initiate transcription.

The enzyme catalyses RNA(n) + a ribonucleoside 5'-triphosphate = RNA(n+1) + diphosphate. Functionally, DNA-dependent RNA polymerase catalyzes the transcription of DNA into RNA using the four ribonucleoside triphosphates as substrates. This is DNA-directed RNA polymerase subunit alpha from Ruegeria pomeroyi (strain ATCC 700808 / DSM 15171 / DSS-3) (Silicibacter pomeroyi).